The sequence spans 515 residues: 1-pyrroline-5-carboxylate dehydrogenase (515 aa).

Catalysis depends on residues Glu286 and Cys320.

Belongs to the aldehyde dehydrogenase family. RocA subfamily.

It catalyses the reaction L-glutamate 5-semialdehyde + NAD(+) + H2O = L-glutamate + NADH + 2 H(+). It participates in amino-acid degradation; L-proline degradation into L-glutamate; L-glutamate from L-proline: step 2/2. The chain is 1-pyrroline-5-carboxylate dehydrogenase from Geobacillus kaustophilus (strain HTA426).